Consider the following 457-residue polypeptide: Multidrug resistance protein MdtK (457 aa).

A run of 12 helical transmembrane segments spans residues 11-31 (LLAL…MGFV), 53-73 (IWLP…PVIA), 93-113 (WLAG…GYII), 127-147 (AVGY…FQVA), 160-180 (GMVM…IFIY), 189-209 (GGVG…LAMV), 243-263 (LPIA…ALLV), 276-296 (IALN…AAVT), 314-334 (AART…IFTV), 350-370 (VVTL…SDSI), 387-407 (IFYI…YILA), and 418-438 (PAGF…MMML).

Belongs to the multi antimicrobial extrusion (MATE) (TC 2.A.66.1) family. MdtK subfamily.

Its subcellular location is the cell inner membrane. Functionally, multidrug efflux pump that functions probably as a Na(+)/drug antiporter. The protein is Multidrug resistance protein MdtK of Escherichia coli (strain SE11).